A 773-amino-acid chain; its full sequence is MQRPPPEDFSLKETRPHLGGGKLSGDKLTSTYDLVEQMQYLYVRVVKAKELPGKDMTGSCDPYVEVKLGNYKGTTRHFEKKSNPEWNQVFAFSKDRIQASFLEATVKDKDFVKDDLIGRVVFDLNEVPKRVPPDSPLAPQWYRLEDRKGDKVKGELMLAVWFGTQADEAFPEAWHSDAATVSGTDALANIRSKVYLSPKLWYLRVNVIEAQDLIPTDKQRYPEVYVKAIVGNQALRTRVSQSRTINPMWNEDLMFVAAEPFEEPLILSVEDRVAPNKDEVLGRCAIPLQYLDRRFDHKPVNSRWYNLEKHIMVDGEKKETKFASRIHMRICLEGGYHVLDESTHYSSDLRPTAKQLWKPNIGVLELGILNATGLMPMKTKDGRGTTDAYCVAKYGQKWIRTRTIIDSFTPRWNEQYTWEVFDPCTVVTVGVFDNCHLHGGEKIGGAKDSRIGKVRIRLSTLETDRVYTHSYPLLVLHPNGVKKMGEIHLAVRFTCSSLLNMMYMYSQPLLPKMHYIHPLTVSQLDNLRHQATQIVSMRLTRAEPPLRKEVVEYMLDVGSHMWSMRRSKANFFRIMGVLSGLIAVGKWFEQICNWKNPITTVLIHLLFIILVLYPELILPTIFLYLFLIGIWYYRWRPRHPPHMDTRLSHADSAHPDELDEEFDTFPTSRPSDIVRMRYDRLRSIAGRIQTVVGDLATQGERLQSLLSWRDPRATALFVLFCLIAAVILYVTPFQVVALCIGIYALRHPRFRYKLPSVPLNFFRRLPARTDCML.

The span at 1–16 shows a compositional bias: basic and acidic residues; the sequence is MQRPPPEDFSLKETRP. Residues 1–24 form a disordered region; sequence MQRPPPEDFSLKETRPHLGGGKLS. C2 domains follow at residues 22 to 142, 181 to 305, and 345 to 471; these read KLSG…PQWY, VSGT…SRWY, and YSSD…THSY. Positions 55, 61, 108, 110, and 115 each coordinate Ca(2+). The next 3 membrane-spanning stretches (helical) occupy residues 574–594, 608–628, and 716–736; these read IMGV…ICNW, IILV…LFLI, and LFVL…FQVV.

This sequence belongs to the MCTP family. In terms of assembly, interacts with and regulates subcellular localization and trafficking of STM. Ca(2+) serves as cofactor. As to expression, accumulates in vascular tissues, leaf primordia and flowers. Highly expressed in roots meristems and in both vegetative and inflorescence shoot apical meristems (SAMs).

The protein resides in the endoplasmic reticulum membrane. Its subcellular location is the cytoplasm. It localises to the vesicle. The protein localises to the cell membrane. It is found in the endosome membrane. The protein resides in the golgi apparatus membrane. Functionally, required for proliferation and differentiation of shoot stem cells in the shoot apical meristem (SAM), thus determining the appropriate balance between the maintenance of shoot stem cells and their differentiation into other aboveground plant parts via the control of subcellular localization and intercellular trafficking of STM in the shoot apex. Prevents intracellular trafficking of STM to the plasma membrane in cells in the peripheral shoot meristem region thus facilitating STM recycling to the nucleus to maintain stem cells. May function as a signaling molecule by regulating the trafficking of other regulators. In Arabidopsis thaliana (Mouse-ear cress), this protein is FT-interacting protein 3.